The following is a 154-amino-acid chain: Leghemoglobin-2 (154 aa).

One can recognise a Globin domain in the interval 3 to 151; it reads ALTESQAALV…LAIVIKKEMN (149 aa). A heme b-binding site is contributed by Ser-46. Ser-46 bears the Phosphoserine mark. His-64 lines the O2 pocket. Residues Lys-67, His-98, and Lys-101 each coordinate heme b. The residue at position 139 (Tyr-139) is a Nitrated tyrosine.

The protein belongs to the plant globin family. In terms of assembly, monomer. Post-translationally, nitrated in effective nodules and particularly in hypoxic conditions; this mechanism may play a protective role in the symbiosis by buffering toxic peroxynitrite NO(2)(-). Nitration level decrease during nodule senescence. Phosphorylation at Ser-46 disrupts the molecular environment of its porphyrin ring oxygen binding pocket, thus leading to a reduced oxygen consumption and to the delivery of oxygen O(2) to symbiosomes. In terms of tissue distribution, root nodules.

It localises to the cytoplasm. It is found in the cytosol. The protein localises to the nucleus. Functionally, leghemoglobin that reversibly binds oxygen O(2) through a pentacoordinated heme iron. In root nodules, facilitates the diffusion of oxygen to the bacteroids while preventing the bacterial nitrogenase from being inactivated by buffering dioxygen, nitric oxide and carbon monoxide, and promoting the formation of reactive oxygen species (ROS, e.g. H(2)O(2)). This role is essential for symbiotic nitrogen fixation (SNF). The chain is Leghemoglobin-2 from Lupinus luteus (European yellow lupine).